The primary structure comprises 591 residues: ATPase family AAA domain-containing protein 3A (591 aa).

The interval 1-52 (MSWLFGIKGPKGEGTGPPLPLPPAQPGAEGGGDRGAGDRPSPKDKWSNFDPT) is disordered. An N-acetylserine modification is found at Ser2. Residues 2–49 (SWLFGIKGPKGEGTGPPLPLPPAQPGAEGGGDRGAGDRPSPKDKWSNF) form a required for interaction with the inner surface of the mitochondrial outer membrane region. The Mitochondrial intermembrane segment spans residues 2–245 (SWLFGIKGPK…FRAFVTDWDK (244 aa)). The segment covering 31-47 (GGDRGAGDRPSPKDKWS) has biased composition (basic and acidic residues). Residues 55–216 (ERAAKAAREL…REQIRLKAAE (162 aa)) are a coiled coil. The helical transmembrane segment at 246-263 (VTATVAGLTLLAVGVYSA) threads the bilayer. Residues 264–586 (KNATSVAGRY…DSQTNKPPHP (323 aa)) lie on the Mitochondrial matrix side of the membrane. The S100B-binding stretch occupies residues 289–304 (RISVLEALRHPIQVSR). 351–358 (GPPGTGKT) contacts ATP. Lys490 is modified (N6-acetyllysine; alternate). Lys490 bears the N6-succinyllysine; alternate mark. An N6-acetyllysine mark is found at Lys494 and Lys512. The disordered stretch occupies residues 572 to 591 (KVERPDSQTNKPPHPSLLSC).

Belongs to the AAA ATPase family. In terms of assembly, can form homooligomers. Homodimer formation at the N-terminus may be regulated by ATP and is required for the interaction with the inner surface of the mitochondrial outer membrane and correct mitochondrial homeostasis. Interacts with components of the mitochondrial ribosome and with other proteins involved in mitochondrial RNA metabolism. May also interact with protein involved in lipid metabolism, including STARD9. May interact with FAM210A. Interacts with GADD45GIP1. Interacts with S100B in a Ca(+2)- and Zn(+2)-dependent manner; this interaction probably occurs in the cytosol prior to mitochondrial targeting. S100B could assist ATAD3A cytoplasmic processing, preventing aggregation and favoring mitochondrial localization. Interacts with HSP60/HSPD1. Interacts with CLPB. Interacts with EIF2AK3/PERK; ATAD3A and EIF2S1/eIF-2-alpha occupy a common binding site within the cytoplasmic loop of EIF2AK3/PERK, leading to prevent EIF2AK3/PERK association with its substrate EIF2S1/eIF-2-alpha. Expressed in heart, spleen, kidney, liver and at smaller levels, in lung and muscle (at protein level).

It is found in the mitochondrion inner membrane. The protein resides in the mitochondrion matrix. The protein localises to the mitochondrion nucleoid. The enzyme catalyses ATP + H2O = ADP + phosphate + H(+). Functionally, essential for mitochondrial network organization, mitochondrial metabolism and cell growth at organism and cellular level. May play an important role in mitochondrial protein synthesis. May also participate in mitochondrial DNA replication. May bind to mitochondrial DNA D-loops and contribute to nucleoid stability. Required for enhanced channeling of cholesterol for hormone-dependent steroidogenesis. Involved in mitochondrial-mediated antiviral innate immunity. Required to protect mitochondria from the PERK-mediated unfolded protein response: specifically inhibits the activity of EIF2AK3/PERK at mitochondria-endoplasmic reticulum contact sites, thereby providing a safe haven for mitochondrial protein translation during endoplasmic reticulum stress. Ability to inhibit EIF2AK3/PERK is independent of its ATPase activity. Also involved in the mitochondrial DNA damage response by promoting signaling between damaged genomes and the mitochondrial membrane, leading to activation of the integrated stress response (ISR). The polypeptide is ATPase family AAA domain-containing protein 3A (Atad3a) (Mus musculus (Mouse)).